A 405-amino-acid chain; its full sequence is NAC transcription factor NAM-A1 (405 aa).

The span at 1 to 10 (MGSSDSSSGS) shows a compositional bias: low complexity. Residues 1-38 (MGSSDSSSGSAQKAARHQHEPPPPRQRGSAPELPPGFR) are disordered. In terms of domain architecture, NAC spans 33–204 (LPPGFRFHPT…DWVLCRIYKK (172 aa)). A DNA-binding region spans residues 137 to 210 (LGVKKALVFY…IYKKINKAAA (74 aa)).

Expressed in flag leaves, green spikes and peduncles.

It localises to the nucleus. In terms of biological role, transcription factor of the NAC family associated with the grain protein content (GPC). Accelerates senescence and increases nutrient remobilization from leaves to developing grains. The tetraploid cultivated wheat (T.durum) contains one additional gene coding for a functional protein (NAM-B2) and one extra pseudogene (NAM-B1). The chain is NAC transcription factor NAM-A1 (NAM-A1) from Triticum turgidum subsp. durum (Durum wheat).